We begin with the raw amino-acid sequence, 86 residues long: MKASMFLALAGLALLFVVCYASESEEKEFSNELLSSVLAVDDNSKGEERECLGFGKGCNPSNDQCCKSSNLVCSRKHRWCKYEIGK.

The first 21 residues, 1 to 21, serve as a signal peptide directing secretion; the sequence is MKASMFLALAGLALLFVVCYA. Positions 22–49 are excised as a propeptide; sequence SESEEKEFSNELLSSVLAVDDNSKGEER. 3 disulfides stabilise this stretch: C51/C66, C58/C73, and C65/C80. Residue I84 is modified to Isoleucine amide.

It belongs to the neurotoxin 10 (Hwtx-1) family. 22 (Htx-4) subfamily. Monomer. In terms of tissue distribution, expressed by the venom gland.

The protein resides in the secreted. In terms of biological role, neurotoxin that selectively inhibits neuronal tetrodotoxin-sensitive voltage-gated sodium channels (Nav) (IC(50)=44.6 nM). It is active on Nav1.2/SCN2A (IC(50)=22.4 nM), Nav1.6/SCN8A (IC(50)=50.1 nM) and Nav1.7/SCN9A (IC(50)=48.9 nM). It shows low affinity for lipid bilayers. The sequence is that of Mu-theraphotoxin-Hhn1b 1 from Cyriopagopus hainanus (Chinese bird spider).